The chain runs to 353 residues: 3-ketosteroid-9-alpha-monooxygenase, ferredoxin reductase component (353 aa).

Residues 8–117 (SHVLELQVAE…LAPSGTFVPK (110 aa)) enclose the FAD-binding FR-type domain. Residues 264–353 (ATAVVTLDGT…SDSVEVTYDE (90 aa)) form the 2Fe-2S ferredoxin-type domain. Positions 300, 305, 308, and 338 each coordinate [2Fe-2S] cluster.

In terms of assembly, monomer. The two-component system 3-ketosteroid-9-alpha-monooxygenase is composed of an oxygenase component KshA and a reductase component KshB. Requires FAD as cofactor. It depends on [2Fe-2S] cluster as a cofactor.

The enzyme catalyses androsta-1,4-diene-3,17-dione + 2 reduced [2Fe-2S]-[ferredoxin] + O2 + 2 H(+) = 9alpha-hydroxyandrosta-1,4-diene-3,17-dione + 2 oxidized [2Fe-2S]-[ferredoxin] + H2O. Its pathway is lipid metabolism; steroid biosynthesis. Functionally, involved in the degradation of cholesterol. Catalyzes the introduction of a 9a-hydroxyl moiety into 1,4-androstadiene-3,17-dione (ADD) to yield the 9alpha-hydroxy-1,4-androstadiene-3,17-dione (9OHADD) intermediate which spontaneously form 3-hydroxy-9,10-seconandrost-1,3,5(10)-triene-9,17-dione (HSA) via the meta-cleavage of ring B with concomitant aromatization of ring A. The chain is 3-ketosteroid-9-alpha-monooxygenase, ferredoxin reductase component (kshB) from Mycolicibacterium smegmatis (strain ATCC 700084 / mc(2)155) (Mycobacterium smegmatis).